Here is a 383-residue protein sequence, read N- to C-terminus: Ceramide synthase 3 (383 aa).

The helical transmembrane segment at 32–52 (VFVKPSHLYVTIPYAFLLLII) threads the bilayer. Residues 66–127 (KSFGIKETVR…RSRRNQERPS (62 aa)) are homeobox-like. The TLC domain occupies 130–331 (KKFQEACWRF…ILKMLNRCIF (202 aa)). 5 helical membrane passes run 139–159 (FAFY…KPWL), 174–194 (LLPS…SLLF), 205–225 (FLAH…SWCA), 264–284 (FFIF…FWIL), and 298–318 (FFSY…HLYW). At 319-383 (GYYILKMLNR…HLIPNGQHGH (65 aa)) the chain is on the cytoplasmic side. Ser340 bears the Phosphoserine mark. Residues 342-355 (DEDYEEEEEEEEEE) show a composition bias toward acidic residues. The tract at residues 342 to 363 (DEDYEEEEEEEEEEATKGKEMD) is disordered.

In terms of tissue distribution, expressed in the epidermis, where it localizes at the interface between the stratum granulosum and the stratum corneum (at protein level).

The protein localises to the endoplasmic reticulum membrane. The enzyme catalyses a very long-chain fatty acyl-CoA + a sphingoid base = an N-(very-long-chain fatty acyl)-sphingoid base + CoA + H(+). The catalysed reaction is docosanoyl-CoA + sphinganine = N-docosanoylsphinganine + CoA + H(+). It carries out the reaction tetracosanoyl-CoA + sphinganine = N-tetracosanoylsphinganine + CoA + H(+). It catalyses the reaction hexacosanoyl-CoA + sphinganine = N-hexacosanoylsphinganine + CoA + H(+). The enzyme catalyses 2-hydroxydocosanoyl-CoA + sphinganine = N-(2-hydroxydocosanoyl)-sphinganine + CoA + H(+). The catalysed reaction is 2-hydroxytetracosanoyl-CoA + sphinganine = N-(2-hydroxytetracosanoyl)-sphinganine + CoA + H(+). It carries out the reaction an ultra-long-chain fatty acyl-CoA + a sphingoid base = an N-(ultra-long-chain-acyl)-sphingoid base + CoA + H(+). It catalyses the reaction octacosanoyl-CoA + sphinganine = N-(octacosanoyl)-sphinganine + CoA + H(+). The enzyme catalyses a fatty acyl-CoA + sphing-4-enine = an N-acylsphing-4-enine + CoA + H(+). The catalysed reaction is sphinganine + octadecanoyl-CoA = N-(octadecanoyl)-sphinganine + CoA + H(+). It carries out the reaction 2-hydroxyoctadecanoyl-CoA + sphinganine = N-(2-hydroxyoctadecanoyl)-sphinganine + CoA + H(+). The protein operates within lipid metabolism; sphingolipid metabolism. Functionally, ceramide synthase that catalyzes the transfer of the acyl chain from acyl-CoA to a sphingoid base, with high selectivity toward very- and ultra-long-chain fatty acyl-CoA (chain length greater than C22). N-acylates sphinganine and sphingosine bases to form dihydroceramides and ceramides in de novo synthesis and salvage pathways, respectively. It is crucial for the synthesis of ultra-long-chain ceramides in the epidermis, to maintain epidermal lipid homeostasis and terminal differentiation. This Homo sapiens (Human) protein is Ceramide synthase 3.